Here is an 83-residue protein sequence, read N- to C-terminus: Exodeoxyribonuclease 7 small subunit (83 aa).

Belongs to the XseB family. In terms of assembly, heterooligomer composed of large and small subunits.

It localises to the cytoplasm. The catalysed reaction is Exonucleolytic cleavage in either 5'- to 3'- or 3'- to 5'-direction to yield nucleoside 5'-phosphates.. Its function is as follows. Bidirectionally degrades single-stranded DNA into large acid-insoluble oligonucleotides, which are then degraded further into small acid-soluble oligonucleotides. This chain is Exodeoxyribonuclease 7 small subunit, found in Nitrobacter hamburgensis (strain DSM 10229 / NCIMB 13809 / X14).